Consider the following 306-residue polypeptide: 4-diphosphocytidyl-2-C-methyl-D-erythritol kinase (306 aa).

The active site involves Lys-11. 98-108 provides a ligand contact to ATP; it reads PIAGGMGGGSA. Asp-140 is a catalytic residue.

This sequence belongs to the GHMP kinase family. IspE subfamily.

The catalysed reaction is 4-CDP-2-C-methyl-D-erythritol + ATP = 4-CDP-2-C-methyl-D-erythritol 2-phosphate + ADP + H(+). Its pathway is isoprenoid biosynthesis; isopentenyl diphosphate biosynthesis via DXP pathway; isopentenyl diphosphate from 1-deoxy-D-xylulose 5-phosphate: step 3/6. Catalyzes the phosphorylation of the position 2 hydroxy group of 4-diphosphocytidyl-2C-methyl-D-erythritol. This chain is 4-diphosphocytidyl-2-C-methyl-D-erythritol kinase, found in Leifsonia xyli subsp. xyli (strain CTCB07).